The sequence spans 421 residues: GTPase Obg (421 aa).

The 158-residue stretch at 1–158 (MYFIDEAINE…FKIKTELKIL (158 aa)) folds into the Obg domain. The 166-residue stretch at 159–324 (ADVGLIGYPS…LKYKMLEMIK (166 aa)) folds into the OBG-type G domain. Residues 165–172 (GYPSVGKS), 190–194 (FTTLK), 211–214 (DLPG), 278–281 (NKMD), and 305–307 (SLL) each bind GTP. The Mg(2+) site is built by serine 172 and threonine 192. Residues 342-421 (TLEEEKPDFV…ICDRVFEFIT (80 aa)) form the OCT domain.

This sequence belongs to the TRAFAC class OBG-HflX-like GTPase superfamily. OBG GTPase family. As to quaternary structure, monomer. Mg(2+) serves as cofactor.

Its subcellular location is the cytoplasm. Its function is as follows. An essential GTPase which binds GTP, GDP and possibly (p)ppGpp with moderate affinity, with high nucleotide exchange rates and a fairly low GTP hydrolysis rate. Plays a role in control of the cell cycle, stress response, ribosome biogenesis and in those bacteria that undergo differentiation, in morphogenesis control. This is GTPase Obg from Phytoplasma mali (strain AT).